The primary structure comprises 278 residues: Tryptophan synthase alpha chain (278 aa).

Catalysis depends on proton acceptor residues E49 and D60.

Belongs to the TrpA family. In terms of assembly, tetramer of two alpha and two beta chains.

It catalyses the reaction (1S,2R)-1-C-(indol-3-yl)glycerol 3-phosphate + L-serine = D-glyceraldehyde 3-phosphate + L-tryptophan + H2O. It participates in amino-acid biosynthesis; L-tryptophan biosynthesis; L-tryptophan from chorismate: step 5/5. Functionally, the alpha subunit is responsible for the aldol cleavage of indoleglycerol phosphate to indole and glyceraldehyde 3-phosphate. This chain is Tryptophan synthase alpha chain, found in Corynebacterium diphtheriae (strain ATCC 700971 / NCTC 13129 / Biotype gravis).